Reading from the N-terminus, the 75-residue chain is Small ribosomal subunit protein bS18 (75 aa).

Belongs to the bacterial ribosomal protein bS18 family. As to quaternary structure, part of the 30S ribosomal subunit. Forms a tight heterodimer with protein bS6.

Its function is as follows. Binds as a heterodimer with protein bS6 to the central domain of the 16S rRNA, where it helps stabilize the platform of the 30S subunit. The chain is Small ribosomal subunit protein bS18 from Buchnera aphidicola subsp. Cinara cedri (strain Cc).